A 268-amino-acid chain; its full sequence is Ubiquinone biosynthesis protein COQ4 homolog, mitochondrial (268 aa).

His171, Asp172, His175, and Glu187 together coordinate Zn(2+).

The protein belongs to the COQ4 family. As to quaternary structure, component of a multi-subunit COQ enzyme complex. The cofactor is Zn(2+).

Its subcellular location is the mitochondrion inner membrane. It catalyses the reaction a 4-hydroxy-3-methoxy-5-(all-trans-polyprenyl)benzoate + H(+) = a 2-methoxy-6-(all-trans-polyprenyl)phenol + CO2. The protein operates within cofactor biosynthesis; ubiquinone biosynthesis. Functionally, lyase that catalyzes the C1-decarboxylation of 4-hydroxy-3-methoxy-5-(all-trans-polyprenyl)benzoic acid into 2-methoxy-6-(all-trans-polyprenyl)phenol during ubiquinone biosynthesis. In Drosophila erecta (Fruit fly), this protein is Ubiquinone biosynthesis protein COQ4 homolog, mitochondrial.